A 228-amino-acid polypeptide reads, in one-letter code: MDDKQKTNEEVKASSFDSEKSSKNQAFENTEEPAEGFQNVQHDNGSNPAQKQNSEAKEASKDQTNTNNNELSKKLEQLETERLTLQEKIAVLEQQHRELEEFLLKMKHEFALAKEALKRDQEKKERLLAESMARDLFPILDTLDHALEHDGENNGLRLIRSQLVSVLEKYGVVEVGKEGEVFDPNWHEFLGYAEGPENKIIKVVRKGYKIGDTLLRPALVVIGKESSC.

Positions 1–22 (MDDKQKTNEEVKASSFDSEKSS) are enriched in basic and acidic residues. Residues 1–71 (MDDKQKTNEE…DQTNTNNNEL (71 aa)) are disordered. A compositionally biased stretch (polar residues) spans 38–53 (QNVQHDNGSNPAQKQN).

Belongs to the GrpE family. Homodimer.

It localises to the cytoplasm. Functionally, participates actively in the response to hyperosmotic and heat shock by preventing the aggregation of stress-denatured proteins, in association with DnaK and GrpE. It is the nucleotide exchange factor for DnaK and may function as a thermosensor. Unfolded proteins bind initially to DnaJ; upon interaction with the DnaJ-bound protein, DnaK hydrolyzes its bound ATP, resulting in the formation of a stable complex. GrpE releases ADP from DnaK; ATP binding to DnaK triggers the release of the substrate protein, thus completing the reaction cycle. Several rounds of ATP-dependent interactions between DnaJ, DnaK and GrpE are required for fully efficient folding. This Coprothermobacter proteolyticus (strain ATCC 35245 / DSM 5265 / OCM 4 / BT) protein is Protein GrpE.